We begin with the raw amino-acid sequence, 394 residues long: Actin-related protein 2 (394 aa).

Met-1 is modified (N-acetylmethionine). Residues 160–162 (GDG) and 214–218 (RMIKE) each bind ATP. Lys-299 is subject to N6-acetyllysine. ATP is bound at residue 305 to 310 (GGSTMY). Lys-322 carries the post-translational modification N6-acetyllysine.

Belongs to the actin family. ARP2 subfamily. In terms of assembly, component of the Arp2/3 complex composed of ACTR2/ARP2, ACTR3/ARP3, ARPC1B/p41-ARC, ARPC2/p34-ARC, ARPC3/p21-ARC, ARPC4/p20-ARC and ARPC5/p16-ARC. Interacts with AVIL.

Its subcellular location is the cytoplasm. The protein localises to the cytoskeleton. It is found in the cell projection. It localises to the nucleus. ATP-binding component of the Arp2/3 complex, a multiprotein complex that mediates actin polymerization upon stimulation by nucleation-promoting factor (NPF). The Arp2/3 complex mediates the formation of branched actin networks in the cytoplasm, providing the force for cell motility. Seems to contact the pointed end of the daughter actin filament. In podocytes, required for the formation of lamellipodia downstream of AVIL and PLCE1 regulation. In addition to its role in the cytoplasmic cytoskeleton, the Arp2/3 complex also promotes actin polymerization in the nucleus, thereby regulating gene transcription and repair of damaged DNA. The Arp2/3 complex promotes homologous recombination (HR) repair in response to DNA damage by promoting nuclear actin polymerization, leading to drive motility of double-strand breaks (DSBs). This chain is Actin-related protein 2 (ACTR2), found in Bos taurus (Bovine).